Here is a 141-residue protein sequence, read N- to C-terminus: Large ribosomal subunit protein uL22 (141 aa).

A disordered region spans residues 110-141 (EEKKTVAKKTTTTKAPAKKTTSTKKATAKKES). Residues 117–134 (KKTTTTKAPAKKTTSTKK) show a composition bias toward low complexity.

This sequence belongs to the universal ribosomal protein uL22 family. In terms of assembly, part of the 50S ribosomal subunit.

Its function is as follows. This protein binds specifically to 23S rRNA; its binding is stimulated by other ribosomal proteins, e.g. L4, L17, and L20. It is important during the early stages of 50S assembly. It makes multiple contacts with different domains of the 23S rRNA in the assembled 50S subunit and ribosome. Functionally, the globular domain of the protein is located near the polypeptide exit tunnel on the outside of the subunit, while an extended beta-hairpin is found that lines the wall of the exit tunnel in the center of the 70S ribosome. The sequence is that of Large ribosomal subunit protein uL22 from Campylobacter jejuni subsp. doylei (strain ATCC BAA-1458 / RM4099 / 269.97).